The primary structure comprises 133 residues: UPF0102 protein ABSDF1354 (133 aa).

Belongs to the UPF0102 family.

The sequence is that of UPF0102 protein ABSDF1354 from Acinetobacter baumannii (strain SDF).